The chain runs to 60 residues: Large ribosomal subunit protein uL30 (60 aa).

The protein belongs to the universal ribosomal protein uL30 family. In terms of assembly, part of the 50S ribosomal subunit.

This Ligilactobacillus salivarius (strain UCC118) (Lactobacillus salivarius) protein is Large ribosomal subunit protein uL30.